The following is a 189-amino-acid chain: dCTP deaminase (189 aa).

DCTP-binding positions include 112-117 (KSTYAR), 136-138 (TLE), glutamine 157, tyrosine 171, and glutamine 181. Glutamate 138 (proton donor/acceptor) is an active-site residue.

This sequence belongs to the dCTP deaminase family. In terms of assembly, homotrimer.

The catalysed reaction is dCTP + H2O + H(+) = dUTP + NH4(+). The protein operates within pyrimidine metabolism; dUMP biosynthesis; dUMP from dCTP (dUTP route): step 1/2. Functionally, catalyzes the deamination of dCTP to dUTP. This Burkholderia mallei (strain NCTC 10247) protein is dCTP deaminase.